The chain runs to 1533 residues: Protein TALPID3 (1533 aa).

A disordered region spans residues 32–57 (LSANKRLPVGTGTSLNGTSRGSSDLT). A compositionally biased stretch (polar residues) spans 42–57 (TGTSLNGTSRGSSDLT). A coiled-coil region spans residues 182–223 (QSDLEAKVNSVTELLSKLQETDKHLQRVTEQQTSIQRKQEKL). The segment covering 309 to 321 (KEVEDTSFDKQKS) has biased composition (basic and acidic residues). Disordered regions lie at residues 309–339 (KEVE…VSRD) and 377–400 (LTRK…TPEK). A Phosphoserine modification is found at S406. The stretch at 467–501 (SVLKDAEKILRGVQNNKKVLEENLEAIIRAKDGAA) forms a coiled coil. Residues 467 to 554 (SVLKDAEKIL…YEQKRFDQKN (88 aa)) form a required for centrosomal localization region. The segment at 546–575 (EQKRFDQKNQRTKKGQNMTKDIRTNTQDKT) is disordered. Residues 560–575 (GQNMTKDIRTNTQDKT) show a composition bias toward polar residues. 2 positions are modified to phosphothreonine: T1042 and T1046. The residue at position 1050 (S1050) is a Phosphoserine. At T1063 the chain carries Phosphothreonine. At S1066 the chain carries Phosphoserine. The disordered stretch occupies residues 1129–1156 (SSPELPKPWGDGDLPLEEENPNSPQEEL).

It belongs to the TALPID3 family. Interacts with CCP110, CEP290, CEP97, KIF24. In terms of tissue distribution, ubiquitously expressed. Expressed in photoreceptor cells (at protein level).

The protein localises to the cytoplasm. Its subcellular location is the cytoskeleton. The protein resides in the microtubule organizing center. It localises to the centrosome. It is found in the photoreceptor inner segment. The protein localises to the centriole. Its subcellular location is the cilium basal body. In terms of biological role, required for ciliogenesis and sonic hedgehog/SHH signaling. Required for the centrosomal recruitment of RAB8A and for the targeting of centriole satellite proteins to centrosomes such as of PCM1. May play a role in early ciliogenesis in the disappearance of centriolar satellites that preceeds ciliary vesicle formation. Involved in regulation of cell intracellular organization. Involved in regulation of cell polarity. Required for asymmetrical localization of CEP120 to daughter centrioles. The polypeptide is Protein TALPID3 (KIAA0586) (Homo sapiens (Human)).